The primary structure comprises 426 residues: Enolase (426 aa).

Q163 is a binding site for (2R)-2-phosphoglycerate. The active-site Proton donor is E205. The Mg(2+) site is built by D242, E285, and D312. Residues K337, R366, S367, and K388 each contribute to the (2R)-2-phosphoglycerate site. K337 functions as the Proton acceptor in the catalytic mechanism.

It belongs to the enolase family. As to quaternary structure, component of the RNA degradosome, a multiprotein complex involved in RNA processing and mRNA degradation. It depends on Mg(2+) as a cofactor.

It localises to the cytoplasm. Its subcellular location is the secreted. The protein resides in the cell surface. It carries out the reaction (2R)-2-phosphoglycerate = phosphoenolpyruvate + H2O. It functions in the pathway carbohydrate degradation; glycolysis; pyruvate from D-glyceraldehyde 3-phosphate: step 4/5. Catalyzes the reversible conversion of 2-phosphoglycerate (2-PG) into phosphoenolpyruvate (PEP). It is essential for the degradation of carbohydrates via glycolysis. The sequence is that of Enolase from Nitrosococcus oceani (strain ATCC 19707 / BCRC 17464 / JCM 30415 / NCIMB 11848 / C-107).